Reading from the N-terminus, the 107-residue chain is U1-lycotoxin-Ls1l (107 aa).

Residues 1 to 20 form the signal peptide; it reads MMKVLVVVALLVTLISYSSS. A propeptide spanning residues 21–41 is cleaved from the precursor; that stretch reads EGIDDLEADELLSLMANEQTR. Intrachain disulfides connect cysteine 44–cysteine 59, cysteine 51–cysteine 68, cysteine 58–cysteine 86, and cysteine 70–cysteine 84.

The protein belongs to the neurotoxin 19 (CSTX) family. 04 (U1-Lctx) subfamily. In terms of tissue distribution, expressed by the venom gland.

The protein resides in the secreted. The chain is U1-lycotoxin-Ls1l from Lycosa singoriensis (Wolf spider).